Consider the following 611-residue polypeptide: Leucine aminopeptidase (611 aa).

Residues 129–131 and 278–282 each bind substrate; these read QCQ and GGMEN. His-305 is a Zn(2+) binding site. Catalysis depends on Glu-306, which acts as the Proton acceptor. Zn(2+)-binding residues include His-309 and Glu-328. Tyr-393 serves as the catalytic Proton donor. 562–564 serves as a coordination point for substrate; the sequence is RMK.

This sequence belongs to the peptidase M1 family. It depends on Zn(2+) as a cofactor.

It localises to the cytoplasm. It carries out the reaction an epoxide + H2O = an ethanediol. Its function is as follows. Aminopeptidase that preferentially cleaves di- and tripeptides. Also has low epoxide hydrolase activity (in vitro). Can hydrolyze the epoxide leukotriene LTA(4) but it forms preferentially 5,6-dihydroxy-7,9,11,14-eicosatetraenoic acid rather than the cytokine leukotriene B(4) as the product compared to the homologous mammalian enzyme (in vitro). This is Leucine aminopeptidase (LKHA4) from Oryza sativa subsp. japonica (Rice).